The primary structure comprises 829 residues: Ectonucleotide pyrophosphatase/phosphodiesterase C27A7.1 (829 aa).

Residues 54-74 form a helical; Signal-anchor for type II membrane protein membrane-spanning segment; that stretch reads VIGIAVLLLAMVVIVVIVLLL. The active-site Nucleophile is T224. N-linked (GlcNAc...) asparagine glycosylation is found at N296, N424, N514, N542, N582, N649, N733, and N748. C439 and C782 are disulfide-bonded.

The protein belongs to the nucleotide pyrophosphatase/phosphodiesterase family.

The protein resides in the membrane. Probable phosphodiesterase. This Caenorhabditis elegans protein is Ectonucleotide pyrophosphatase/phosphodiesterase C27A7.1.